The sequence spans 1108 residues: Transmembrane protein 132C (1108 aa).

A signal peptide spans 1–27 (MRSEGAAPGPAAPLCGALSLLLGALLG). The Extracellular segment spans residues 28–922 (KVIEGHGVTD…LVQTPRGLSD (895 aa)). N-linked (GlcNAc...) asparagine glycosylation is found at Asn-316 and Asn-373. The span at 820–836 (HASDRRQKGQHHERTGQ) shows a compositional bias: basic and acidic residues. The interval 820 to 857 (HASDRRQKGQHHERTGQDGHLYGSSPVEREEGALRRAT) is disordered. The chain crosses the membrane as a helical span at residues 923 to 943 (LEIGMYALLGVFCLAILVFLI). The Cytoplasmic segment spans residues 944–1108 (NCATFALKYR…NYLEKLKDKA (165 aa)). Residues 1022 to 1072 (QSQIHRSADSGGRQGREQKQDPLHSPTSKRKKVKFTTFTTIPPDDSCPTVN) are disordered.

This sequence belongs to the TMEM132 family.

It is found in the membrane. The sequence is that of Transmembrane protein 132C (TMEM132C) from Homo sapiens (Human).